The following is an 806-amino-acid chain: Polyribonucleotide nucleotidyltransferase (806 aa).

Residues aspartate 488 and aspartate 494 each contribute to the Mg(2+) site. Residues 555 to 614 (PQIRTVQIPTDKIRDLIGPGGKTIRGIIEATQVKIDVDDTGRVNIASSDEEGLKKALAMI) form the KH domain. Residues 624–691 (GKTYLGKVVR…EGNRIKLSRK (68 aa)) enclose the S1 motif domain. The disordered stretch occupies residues 698–806 (RQKLGLPEPG…QGGGGNRGPQ (109 aa)). The segment covering 704 to 717 (PEPGAEAPAAAEGQ) has biased composition (low complexity). Over residues 738-757 (GGEDFDDFDEEGGEGEGEDE) the composition is skewed to acidic residues. Residues 758-774 (NFNREDTPNSAPGERRP) are compositionally biased toward basic and acidic residues. The span at 783–792 (RGRRRRRGRG) shows a compositional bias: basic residues. Over residues 793 to 806 (RGPGQGGGGNRGPQ) the composition is skewed to gly residues.

The protein belongs to the polyribonucleotide nucleotidyltransferase family. Requires Mg(2+) as cofactor.

The protein resides in the cytoplasm. The catalysed reaction is RNA(n+1) + phosphate = RNA(n) + a ribonucleoside 5'-diphosphate. Its function is as follows. Involved in mRNA degradation. Catalyzes the phosphorolysis of single-stranded polyribonucleotides processively in the 3'- to 5'-direction. The chain is Polyribonucleotide nucleotidyltransferase from Acidobacterium capsulatum (strain ATCC 51196 / DSM 11244 / BCRC 80197 / JCM 7670 / NBRC 15755 / NCIMB 13165 / 161).